Reading from the N-terminus, the 398-residue chain is Probable elongation factor 1-gamma (398 aa).

The region spanning glycine 66–phenylalanine 199 is the GST C-terminal domain. The disordered stretch occupies residues alanine 210–lysine 248. The segment covering proline 211 to lysine 221 has biased composition (basic and acidic residues). The EF-1-gamma C-terminal domain occupies serine 239–lysine 398.

EF-1 is composed of four subunits: alpha, beta, delta, and gamma. AMPylated by fic-1.

Functionally, probably plays a role in anchoring the complex to other cellular components. The polypeptide is Probable elongation factor 1-gamma (Caenorhabditis elegans).